The sequence spans 20 residues: Superoxide dismutase [Fe] (20 aa).

It belongs to the iron/manganese superoxide dismutase family. As to quaternary structure, homodimer. Fe cation serves as cofactor.

The protein localises to the periplasm. It catalyses the reaction 2 superoxide + 2 H(+) = H2O2 + O2. Its function is as follows. Destroys superoxide anion radicals which are normally produced within the cells and which are toxic to biological systems. This chain is Superoxide dismutase [Fe] (sodB), found in Photobacterium damsela subsp. piscicida (Pasteurella piscicida).